The sequence spans 193 residues: V-type sodium ATPase subunit E (193 aa).

Belongs to the V-ATPase E subunit family. In terms of processing, the N-terminus is blocked.

Involved in ATP-driven sodium extrusion. This Enterococcus hirae (strain ATCC 9790 / DSM 20160 / JCM 8729 / LMG 6399 / NBRC 3181 / NCIMB 6459 / NCDO 1258 / NCTC 12367 / WDCM 00089 / R) protein is V-type sodium ATPase subunit E (ntpE).